The chain runs to 435 residues: Nuclear hormone receptor family member nhr-136 (435 aa).

Positions 50–129 (PSNCKVCRHS…AGMNPSAIQA (80 aa)) form a DNA-binding region, nuclear receptor. 2 consecutive NR C4-type zinc fingers follow at residues 53–73 (CKVC…CNGC) and 89–112 (CLKM…CRAC). Residues 194 to 430 (RDIRKLDELI…RYTRISNLYE (237 aa)) enclose the NR LBD domain.

The protein belongs to the nuclear hormone receptor family.

The protein localises to the nucleus. Orphan nuclear receptor. The polypeptide is Nuclear hormone receptor family member nhr-136 (nhr-136) (Caenorhabditis elegans).